The chain runs to 384 residues: 8-amino-7-oxononanoate synthase (384 aa).

R21 contributes to the substrate binding site. 108 to 109 (GF) lines the pyridoxal 5'-phosphate pocket. H133 contacts substrate. Residues S179, H207, and T233 each coordinate pyridoxal 5'-phosphate. K236 is modified (N6-(pyridoxal phosphate)lysine). T352 is a substrate binding site.

Belongs to the class-II pyridoxal-phosphate-dependent aminotransferase family. BioF subfamily. In terms of assembly, homodimer. Pyridoxal 5'-phosphate is required as a cofactor.

The catalysed reaction is 6-carboxyhexanoyl-[ACP] + L-alanine + H(+) = (8S)-8-amino-7-oxononanoate + holo-[ACP] + CO2. It functions in the pathway cofactor biosynthesis; biotin biosynthesis. In terms of biological role, catalyzes the decarboxylative condensation of pimeloyl-[acyl-carrier protein] and L-alanine to produce 8-amino-7-oxononanoate (AON), [acyl-carrier protein], and carbon dioxide. The sequence is that of 8-amino-7-oxononanoate synthase from Escherichia coli (strain K12 / DH10B).